A 65-amino-acid chain; its full sequence is Large ribosomal subunit protein bL31 (65 aa).

The Zn(2+) site is built by C16, C18, C36, and C39.

It belongs to the bacterial ribosomal protein bL31 family. Type A subfamily. Part of the 50S ribosomal subunit. Zn(2+) serves as cofactor.

Functionally, binds the 23S rRNA. This is Large ribosomal subunit protein bL31 from Alkaliphilus metalliredigens (strain QYMF).